We begin with the raw amino-acid sequence, 137 residues long: Large ribosomal subunit protein uL16 (137 aa).

It belongs to the universal ribosomal protein uL16 family. Part of the 50S ribosomal subunit.

Functionally, binds 23S rRNA and is also seen to make contacts with the A and possibly P site tRNAs. The polypeptide is Large ribosomal subunit protein uL16 (Chlamydia abortus (strain DSM 27085 / S26/3) (Chlamydophila abortus)).